The sequence spans 956 residues: Glutamate receptor ionotropic, kainate 4 (956 aa).

The signal sequence occupies residues 1–20; sequence MPRVSAPLVLLPAWLVMVAC. The Extracellular portion of the chain corresponds to 21–545; it reads SPHSLRIAAI…YFSFLDPFSP (525 aa). 8 N-linked (GlcNAc...) asparagine glycosylation sites follow: N158, N220, N272, N286, N323, N408, N415, and N479. 3 residues coordinate L-glutamate: G500, T502, and R507. The chain crosses the membrane as a helical span at residues 546–566; sequence GVWLFMLLAYLAVSCVLFLVA. The Cytoplasmic segment spans residues 567-623; it reads RLTPYEWYSPHPCAQGRCNLLVNQYSLGNSLWFPVGGFMQQGSTIAPRALSTRCVSG. The chain crosses the membrane as a helical span at residues 624 to 644; that stretch reads VWWAFTLIIISSYTANLAAFL. The Extracellular portion of the chain corresponds to 645-804; it reads TVQRMDVPIE…HRAKGLGMEN (160 aa). Residues S674, S675, and E723 each contribute to the L-glutamate site. N736 carries an N-linked (GlcNAc...) asparagine glycan. Residues 805–825 form a helical membrane-spanning segment; that stretch reads IGGIFVVLICGLIVAIFMAML. At 826 to 956 the chain is on the cytoplasmic side; sequence EFLWTLRHSE…EKTTNSSEPE (131 aa). Disordered regions lie at residues 863 to 889 and 931 to 956; these read RRRAAVPPPRPPIPEERRPRGTATLSN and LRARPSPARSEESLEWEKTTNSSEPE. The span at 939-948 shows a compositional bias: basic and acidic residues; sequence RSEESLEWEK.

The protein belongs to the glutamate-gated ion channel (TC 1.A.10.1) family. GRIK4 subfamily. Homodimer. Can form functional heteromeric receptors with GRIK1, GRIK2 and GRIK3.

Its subcellular location is the cell membrane. It is found in the postsynaptic cell membrane. It localises to the presynaptic cell membrane. Its function is as follows. Ionotropic glutamate receptor that functions as a cation-permeable ligand-gated ion channel. Cannot form functional channels on its own. Shows channel activity only in heteromeric assembly with GRIK1, GRIK2 and GRIK3 subunits. The polypeptide is Glutamate receptor ionotropic, kainate 4 (GRIK4) (Homo sapiens (Human)).